Here is a 214-residue protein sequence, read N- to C-terminus: 3-isopropylmalate dehydratase small subunit (214 aa).

This sequence belongs to the LeuD family. LeuD type 1 subfamily. In terms of assembly, heterodimer of LeuC and LeuD.

It catalyses the reaction (2R,3S)-3-isopropylmalate = (2S)-2-isopropylmalate. It participates in amino-acid biosynthesis; L-leucine biosynthesis; L-leucine from 3-methyl-2-oxobutanoate: step 2/4. Functionally, catalyzes the isomerization between 2-isopropylmalate and 3-isopropylmalate, via the formation of 2-isopropylmaleate. In Alcanivorax borkumensis (strain ATCC 700651 / DSM 11573 / NCIMB 13689 / SK2), this protein is 3-isopropylmalate dehydratase small subunit.